Here is a 132-residue protein sequence, read N- to C-terminus: Small ribosomal subunit protein uS8 (132 aa).

Belongs to the universal ribosomal protein uS8 family. As to quaternary structure, part of the 30S ribosomal subunit. Contacts proteins S5 and S12.

Its function is as follows. One of the primary rRNA binding proteins, it binds directly to 16S rRNA central domain where it helps coordinate assembly of the platform of the 30S subunit. The chain is Small ribosomal subunit protein uS8 from Syntrophomonas wolfei subsp. wolfei (strain DSM 2245B / Goettingen).